Reading from the N-terminus, the 328-residue chain is Tetraacyldisaccharide 4'-kinase (328 aa).

52 to 59 (NAGGTGKT) lines the ATP pocket.

It belongs to the LpxK family.

The enzyme catalyses a lipid A disaccharide + ATP = a lipid IVA + ADP + H(+). It functions in the pathway glycolipid biosynthesis; lipid IV(A) biosynthesis; lipid IV(A) from (3R)-3-hydroxytetradecanoyl-[acyl-carrier-protein] and UDP-N-acetyl-alpha-D-glucosamine: step 6/6. Functionally, transfers the gamma-phosphate of ATP to the 4'-position of a tetraacyldisaccharide 1-phosphate intermediate (termed DS-1-P) to form tetraacyldisaccharide 1,4'-bis-phosphate (lipid IVA). This is Tetraacyldisaccharide 4'-kinase from Jannaschia sp. (strain CCS1).